The following is a 442-amino-acid chain: Decapping and exoribonuclease protein 1 (442 aa).

Residues 31–40 (QSKLCKEKTT) are compositionally biased toward basic and acidic residues. The tract at residues 31 to 56 (QSKLCKEKTTSDSSSSRKPSQQRDNY) is disordered. A compositionally biased stretch (low complexity) spans 41-53 (SDSSSSRKPSQQR). Residue Arg101 coordinates substrate. Glu255 provides a ligand contact to a divalent metal cation. Glu293 is a binding site for substrate. 3 residues coordinate a divalent metal cation: Asp295, Glu306, and Leu307. Residues Lys308 and Gln330 each coordinate substrate.

This sequence belongs to the DXO/Dom3Z family. Requires a divalent metal cation as cofactor.

The protein resides in the cytoplasm. The enzyme catalyses a 5'-end NAD(+)-phospho-ribonucleoside in mRNA + H2O = a 5'-end phospho-ribonucleoside in mRNA + NAD(+) + H(+). The catalysed reaction is a 5'-end (N(7)-methyl 5'-triphosphoguanosine)-ribonucleoside-ribonucleotide in mRNA + H2O = a (N(7)-methyl 5'-triphosphoguanosine)-nucleoside + a 5'-end phospho-ribonucleoside in mRNA + H(+). Functionally, decapping enzyme for NAD-capped RNAs: specifically hydrolyzes the nicotinamide adenine dinucleotide (NAD) cap from a subset of RNAs by removing the entire NAD moiety from the 5'-end of an NAD-capped RNA. The NAD-cap is present at the 5'-end of some RNAs and snoRNAs. In contrast to the canonical 5'-end N7 methylguanosine (m7G) cap, the NAD cap promotes mRNA decay. Also acts as a non-canonical decapping enzyme that removes the entire cap structure of m7G capped or incompletely capped RNAs. Has decapping activity toward incomplete 5'-end m7G cap mRNAs such as unmethylated 5'-end-capped RNA (cap0), while it has no activity toward 2'-O-ribose methylated m7G cap (cap1). Also has 5'-3' exonuclease activity. The polypeptide is Decapping and exoribonuclease protein 1 (DXO1) (Saccharomyces cerevisiae (strain ATCC 204508 / S288c) (Baker's yeast)).